The sequence spans 505 residues: Histidine ammonia-lyase (505 aa).

Residues 141–143 (ASG) constitute a cross-link (5-imidazolinone (Ala-Gly)). 2,3-didehydroalanine (Ser) is present on S142.

Belongs to the PAL/histidase family. Contains an active site 4-methylidene-imidazol-5-one (MIO), which is formed autocatalytically by cyclization and dehydration of residues Ala-Ser-Gly.

Its subcellular location is the cytoplasm. It catalyses the reaction L-histidine = trans-urocanate + NH4(+). It functions in the pathway amino-acid degradation; L-histidine degradation into L-glutamate; N-formimidoyl-L-glutamate from L-histidine: step 1/3. The chain is Histidine ammonia-lyase from Bacillus cereus (strain 03BB102).